A 206-amino-acid chain; its full sequence is Large ribosomal subunit protein eL13 (206 aa).

A compositionally biased stretch (basic and acidic residues) spans 184–193 (EKTNQKWDGK). A disordered region spans residues 184 to 206 (EKTNQKWDGKRKAKAQAAAEPKA).

The protein belongs to the eukaryotic ribosomal protein eL13 family.

This chain is Large ribosomal subunit protein eL13 (RPL13), found in Tetrahymena thermophila (strain SB210).